A 743-amino-acid chain; its full sequence is Putative pre-mRNA-splicing factor ATP-dependent RNA helicase DHX32 (743 aa).

M1 carries the N-acetylmethionine modification. The tract at residues 1–28 is disordered; it reads MEEEGLECPNSSSEKRYFPESLDSSDGD. In terms of domain architecture, Helicase ATP-binding spans 72-238; that stretch reads MENLLQNQIV…YGNVPVIEVK (167 aa). 85 to 92 is an ATP binding site; the sequence is GDAKCGKS. The DEAH box signature appears at 185–188; the sequence is DDIH.

It belongs to the DEAD box helicase family. DEAH subfamily. Expressed in lymphoid tissues (at protein level). Expressed in brain, heart, skeletal muscle, colon, thymus, spleen, kidney, liver, small intestine, placenta, lung, lymphoid tissues and blood leukocytes.

It is found in the nucleus. Its subcellular location is the mitochondrion. It carries out the reaction ATP + H2O = ADP + phosphate + H(+). This Homo sapiens (Human) protein is Putative pre-mRNA-splicing factor ATP-dependent RNA helicase DHX32 (DHX32).